We begin with the raw amino-acid sequence, 180 residues long: Shikimate kinase (180 aa).

14–19 (GAGKSS) lines the ATP pocket. S18 is a binding site for Mg(2+). Residues D36, R60, and G82 each contribute to the substrate site. Position 120 (R120) interacts with ATP. A substrate-binding site is contributed by R139.

The protein belongs to the shikimate kinase family. As to quaternary structure, monomer. It depends on Mg(2+) as a cofactor.

The protein localises to the cytoplasm. The catalysed reaction is shikimate + ATP = 3-phosphoshikimate + ADP + H(+). The protein operates within metabolic intermediate biosynthesis; chorismate biosynthesis; chorismate from D-erythrose 4-phosphate and phosphoenolpyruvate: step 5/7. Catalyzes the specific phosphorylation of the 3-hydroxyl group of shikimic acid using ATP as a cosubstrate. This Xylella fastidiosa (strain M12) protein is Shikimate kinase.